Consider the following 27-residue polypeptide: Cupiennin-4b (27 aa).

Gln-27 bears the Glutamine amide mark.

In terms of tissue distribution, expressed by the venom gland.

Its subcellular location is the secreted. In Cupiennius salei (American wandering spider), this protein is Cupiennin-4b.